The primary structure comprises 296 residues: Factor associated with metabolism and energy (296 aa).

Gly-2 carries N-myristoyl glycine lipidation. Basic and acidic residues-rich tracts occupy residues 173–187 and 267–281; these read SLHG…SPRD and EQGK…LVRT. 2 disordered regions span residues 173-204 and 256-281; these read SLHG…DDHD and LLWD…LVRT.

It localises to the cell membrane. The protein resides in the cytoplasmic vesicle. May be involved in tuning the metabolism, energy expenditure, and excretion processes. In Homo sapiens (Human), this protein is Factor associated with metabolism and energy.